The primary structure comprises 806 residues: Leucine--tRNA ligase (806 aa).

The 'HIGH' region signature appears at 40–51 (PYPSGAGLHVGH). Residues 578–582 (KMSKS) carry the 'KMSKS' region motif. Lysine 581 is an ATP binding site.

Belongs to the class-I aminoacyl-tRNA synthetase family.

It is found in the cytoplasm. It carries out the reaction tRNA(Leu) + L-leucine + ATP = L-leucyl-tRNA(Leu) + AMP + diphosphate. This is Leucine--tRNA ligase from Staphylococcus aureus (strain MSSA476).